A 130-amino-acid chain; its full sequence is Trypsin inhibitor (130 aa).

The interval 27-49 (LHKQARQSGSGPSPQGPQQRPPL) is disordered. Residues 32–49 (RQSGSGPSPQGPQQRPPL) are compositionally biased toward low complexity.

The protein belongs to the 2S seed storage albumins family. The protein consists of two chains linked by disulfide bonds.

Inhibits trypsin with a Ki of 7 x 10(-6) M. This is Trypsin inhibitor from Mutarda arvensis (Charlock mustard).